Consider the following 218-residue polypeptide: 3-dehydroquinate dehydratase (218 aa).

3-dehydroquinate contacts are provided by residues 29–31 and R56; that span reads EFR. H116 serves as the catalytic Proton donor/acceptor. The active-site Schiff-base intermediate with substrate is K142. 3 residues coordinate 3-dehydroquinate: R180, S200, and Q204.

It belongs to the type-I 3-dehydroquinase family. Homodimer.

The catalysed reaction is 3-dehydroquinate = 3-dehydroshikimate + H2O. The protein operates within metabolic intermediate biosynthesis; chorismate biosynthesis; chorismate from D-erythrose 4-phosphate and phosphoenolpyruvate: step 3/7. Functionally, involved in the third step of the chorismate pathway, which leads to the biosynthesis of aromatic amino acids. Catalyzes the cis-dehydration of 3-dehydroquinate (DHQ) and introduces the first double bond of the aromatic ring to yield 3-dehydroshikimate. This chain is 3-dehydroquinate dehydratase, found in Methanococcus maripaludis (strain C5 / ATCC BAA-1333).